We begin with the raw amino-acid sequence, 353 residues long: Paraneoplastic antigen Ma1 homolog (353 aa).

The protein belongs to the PNMA family. Predominantly expressed in testis. Very low levels in the brain, including in the piriform cortex, hippocampus and some subcortical nuclei.

It localises to the nucleus. It is found in the nucleolus. The sequence is that of Paraneoplastic antigen Ma1 homolog (Pnma1) from Mus musculus (Mouse).